Here is a 497-residue protein sequence, read N- to C-terminus: MQEPLLRTEGLDYDTFPEVPATPGERERAGALKNRRVFLATFAAVLGNFSFGYALVYTSPVIPELKLSSDPALHLDKIQASWFGSVFTLGAAAGGLSAMLLNDLLGRKLSIMFSAVPSAIGYAIMAGARGLWMLLLGRMLTGFAGGLTAACIPVYVSEIAPPDVRGALGATPQLMAVFGSLSLYALGLLLPWRWLAVAGEGPVLIMILLLSFMPNSPRFLLSKSRDEEALQALTWLRADSEVHWEFEQIQDNVRRQSSRVSWAEAREPRVYRPVLIAVLMRFLQQLTGITPILVYLQTIFDNTSVVLPSQQDAAIVGAVRLLSVLIAAVTMDLAGRKVLLYVSASVMFAANLTLGLYVQFVPRPLTPNSTVEIVTLGDTAFNYLTLIPLLATMLFIMGYAMGWGPITWLLMSEVLPLRARGVASGLCVLVSWLTAFVLTNYFLLAVNAFGLQVPFFFFSAICLLSLLFTGCCVPETRGRSLEQIEAFFHTRRMSFRP.

Over 1 to 36 (MQEPLLRTEGLDYDTFPEVPATPGERERAGALKNRR) the chain is Cytoplasmic. Residues 5-6 (LL) carry the Dileucine internalization motif motif. A helical membrane pass occupies residues 37–57 (VFLATFAAVLGNFSFGYALVY). At 58-80 (TSPVIPELKLSSDPALHLDKIQA) the chain is on the extracellular side. A helical transmembrane segment spans residues 81 to 101 (SWFGSVFTLGAAAGGLSAMLL). Over 102–115 (NDLLGRKLSIMFSA) the chain is Cytoplasmic. The helical transmembrane segment at 116–136 (VPSAIGYAIMAGARGLWMLLL) threads the bilayer. Topologically, residues 137–138 (GR) are extracellular. Residues 139–159 (MLTGFAGGLTAACIPVYVSEI) form a helical membrane-spanning segment. The Cytoplasmic segment spans residues 160–171 (APPDVRGALGAT). A helical transmembrane segment spans residues 172–192 (PQLMAVFGSLSLYALGLLLPW). Residue Q173 coordinates a D-hexose. R193 is a topological domain (extracellular). Residues 194–214 (WLAVAGEGPVLIMILLLSFMP) traverse the membrane as a helical segment. The Cytoplasmic segment spans residues 215–273 (NSPRFLLSKSRDEEALQALTWLRADSEVHWEFEQIQDNVRRQSSRVSWAEAREPRVYRP). A helical transmembrane segment spans residues 274-294 (VLIAVLMRFLQQLTGITPILV). Residue 284–285 (QQ) participates in a D-hexose binding. Over 295–312 (YLQTIFDNTSVVLPSQQD) the chain is Extracellular. N302 carries N-linked (GlcNAc...) asparagine glycosylation. A helical transmembrane segment spans residues 313 to 333 (AAIVGAVRLLSVLIAAVTMDL). The Cytoplasmic portion of the chain corresponds to 334–337 (AGRK). A helical membrane pass occupies residues 338 to 358 (VLLYVSASVMFAANLTLGLYV). At 359 to 385 (QFVPRPLTPNSTVEIVTLGDTAFNYLT) the chain is on the extracellular side. A glycan (N-linked (GlcNAc...) asparagine) is linked at N368. The chain crosses the membrane as a helical span at residues 386 to 406 (LIPLLATMLFIMGYAMGWGPI). Over 407–425 (TWLLMSEVLPLRARGVASG) the chain is Cytoplasmic. W408 lines the a D-hexose pocket. The helical transmembrane segment at 426-446 (LCVLVSWLTAFVLTNYFLLAV) threads the bilayer. Residue N447 is a topological domain, extracellular. The chain crosses the membrane as a helical span at residues 448-468 (AFGLQVPFFFFSAICLLSLLF). Residues 469–497 (TGCCVPETRGRSLEQIEAFFHTRRMSFRP) lie on the Cytoplasmic side of the membrane.

It belongs to the major facilitator superfamily. Sugar transporter (TC 2.A.1.1) family. As to expression, mainly expressed in brain and spleen. Also expressed in lung, heart, muscle, liver, kidney, fat, whole blood, testes, ovaries and uterus.

Its subcellular location is the lysosome membrane. Probable sugar transporter that acts as a regulator of glycolysis in macrophages. Does not transport glucose. The polypeptide is Solute carrier family 2, facilitated glucose transporter member 6 (Mus musculus (Mouse)).